A 406-amino-acid polypeptide reads, in one-letter code: Argininosuccinate synthase (406 aa).

ATP is bound by residues A11 to S19 and A38. Residues Y91 and S96 each coordinate L-citrulline. Position 121 (G121) interacts with ATP. L-aspartate contacts are provided by T123, N127, and D128. N127 is a binding site for L-citrulline. L-citrulline is bound by residues R131, S181, S190, E266, and Y278.

Belongs to the argininosuccinate synthase family. Type 1 subfamily. In terms of assembly, homotetramer.

Its subcellular location is the cytoplasm. It carries out the reaction L-citrulline + L-aspartate + ATP = 2-(N(omega)-L-arginino)succinate + AMP + diphosphate + H(+). The protein operates within amino-acid biosynthesis; L-arginine biosynthesis; L-arginine from L-ornithine and carbamoyl phosphate: step 2/3. This is Argininosuccinate synthase from Campylobacter jejuni subsp. jejuni serotype O:23/36 (strain 81-176).